The chain runs to 211 residues: MITGKLITVEGPDGAGKTTVLEQLIPLLKQKVAQDILTTREPGGVAISEHIRELILDINHTAMDPKTELLLYIAARRQHLVEKVLPALEAGQLVFIDRFIDSSVAYQGAGRGLTKADIQWLNEFATDGLEPDLTLYFDVPSEIGLARINANQQREINRLDLETIEIHQRVRKGYLALAKEHPKRIVTIDATKPLKEVVSVALEHVLALLLA.

ATP is bound at residue 11-18 (GPDGAGKT).

Belongs to the thymidylate kinase family.

The enzyme catalyses dTMP + ATP = dTDP + ADP. Phosphorylation of dTMP to form dTDP in both de novo and salvage pathways of dTTP synthesis. In Streptococcus pyogenes serotype M49 (strain NZ131), this protein is Thymidylate kinase.